Reading from the N-terminus, the 392-residue chain is Na(+)/H(+) antiporter NhaA 2 (392 aa).

11 helical membrane-spanning segments follow: residues 20 to 40 (FFAA…AALI), 63 to 83 (VEHW…GLEI), 99 to 119 (ALPG…YVAF), 127 to 147 (IGGW…VLSL), 158 to 178 (IFLS…IALF), 181 to 201 (SDLS…LVAL), 209 to 229 (LLPY…SGIH), 265 to 285 (VAFA…LSGI), 298 to 318 (VALG…ALAI), 336 to 356 (GVAA…ALAF), and 365 to 385 (EVKV…VVVL).

It belongs to the NhaA Na(+)/H(+) (TC 2.A.33) antiporter family.

The protein resides in the cell inner membrane. It catalyses the reaction Na(+)(in) + 2 H(+)(out) = Na(+)(out) + 2 H(+)(in). Functionally, na(+)/H(+) antiporter that extrudes sodium in exchange for external protons. This Pseudomonas savastanoi pv. phaseolicola (strain 1448A / Race 6) (Pseudomonas syringae pv. phaseolicola (strain 1448A / Race 6)) protein is Na(+)/H(+) antiporter NhaA 2.